We begin with the raw amino-acid sequence, 176 residues long: NAD(P)H-quinone oxidoreductase subunit 6, chloroplastic (176 aa).

Helical transmembrane passes span 10–30 (FLLV…VLLP), 32–52 (PIFS…LYIL), 61–81 (AQLL…VMFM), 92–112 (LWTV…FSLL), and 152–172 (FFLP…GAIS).

Belongs to the complex I subunit 6 family. As to quaternary structure, NDH is composed of at least 16 different subunits, 5 of which are encoded in the nucleus.

The protein resides in the plastid. It is found in the chloroplast thylakoid membrane. It catalyses the reaction a plastoquinone + NADH + (n+1) H(+)(in) = a plastoquinol + NAD(+) + n H(+)(out). The enzyme catalyses a plastoquinone + NADPH + (n+1) H(+)(in) = a plastoquinol + NADP(+) + n H(+)(out). Functionally, NDH shuttles electrons from NAD(P)H:plastoquinone, via FMN and iron-sulfur (Fe-S) centers, to quinones in the photosynthetic chain and possibly in a chloroplast respiratory chain. The immediate electron acceptor for the enzyme in this species is believed to be plastoquinone. Couples the redox reaction to proton translocation, and thus conserves the redox energy in a proton gradient. The polypeptide is NAD(P)H-quinone oxidoreductase subunit 6, chloroplastic (ndhG) (Lepidium virginicum (Virginia pepperweed)).